Consider the following 251-residue polypeptide: 1-(5-phosphoribosyl)-5-[(5-phosphoribosylamino)methylideneamino] imidazole-4-carboxamide isomerase (251 aa).

Asp-8 functions as the Proton acceptor in the catalytic mechanism. The Proton donor role is filled by Asp-131.

This sequence belongs to the HisA/HisF family.

The protein localises to the cytoplasm. It catalyses the reaction 1-(5-phospho-beta-D-ribosyl)-5-[(5-phospho-beta-D-ribosylamino)methylideneamino]imidazole-4-carboxamide = 5-[(5-phospho-1-deoxy-D-ribulos-1-ylimino)methylamino]-1-(5-phospho-beta-D-ribosyl)imidazole-4-carboxamide. It functions in the pathway amino-acid biosynthesis; L-histidine biosynthesis; L-histidine from 5-phospho-alpha-D-ribose 1-diphosphate: step 4/9. The polypeptide is 1-(5-phosphoribosyl)-5-[(5-phosphoribosylamino)methylideneamino] imidazole-4-carboxamide isomerase (Burkholderia vietnamiensis (strain G4 / LMG 22486) (Burkholderia cepacia (strain R1808))).